The following is a 638-amino-acid chain: Exotoxin A (638 aa).

The N-terminal stretch at 1–25 is a signal peptide; that stretch reads MHLTPHWIPLVASLGLLAGGSFASA. Positions 26–277 are domain Ia (required for target cell recognition); that stretch reads AEEAFDLWNE…VISHRLHFPE (252 aa). The segment at 278-389 is II (required for translocation in target cell cytoplasm); it reads GGSLAALTAH…TGNDEAGAAS (112 aa). Cysteines 290 and 312 form a disulfide. The domain Ib stretch occupies residues 390-429; it reads ADVVSLTCPVAAGECAGPADSGDALLERNYPTGAEFLGDG. An III (required for ADP-ribosyl activity) region spans residues 430 to 638; it reads GDISFSTRGT…PGKPPREDLK (209 aa). NAD(+)-binding positions include 465 to 467, Ser474, 479 to 485, and Glu578; these read HGT and GVRARSQ. Glu578 is an active-site residue. Residues 596–638 are disordered; the sequence is IPTDPRNVGGDLDPSSIPDKEQAISALPDYASQPGKPPREDLK.

The 8 cysteines participate in intrachain disulfide bonds.

The enzyme catalyses diphthamide-[translation elongation factor 2] + NAD(+) = N-(ADP-D-ribosyl)diphthamide-[translation elongation factor 2] + nicotinamide + H(+). Its activity is regulated as follows. Inhibited by 1,8-naphthalimide (NAP) as well as a number of poly(ADP-ribose) polymerase inhibitors and other compounds. In terms of biological role, an NAD-dependent ADP-ribosyltransferase (ADPRT). Catalyzes the transfer of the ADP ribosyl moiety of oxidized NAD (NAD(+)) onto eukaryotic elongation factor 2 (eEF-2) thus arresting protein synthesis. Has an LD(50) of 65 ng/ml against the human lung epithelial cell line C38. This chain is Exotoxin A, found in Pseudomonas aeruginosa (strain ATCC 15692 / DSM 22644 / CIP 104116 / JCM 14847 / LMG 12228 / 1C / PRS 101 / PAO1).